A 924-amino-acid polypeptide reads, in one-letter code: DNA repair and recombination protein RDH54 (924 aa).

Residues 1–10 (MQIPKYENKP) are compositionally biased toward basic and acidic residues. 2 disordered regions span residues 1–21 (MQIP…GSNK) and 155–182 (EALS…KNDG). Positions 168–178 (TTSTTETVPST) are enriched in low complexity. The Helicase ATP-binding domain occupies 299 to 487 (LENDSDISGC…FTIIDFINPG (189 aa)). 346-353 (IPLTGLCK) serves as a coordination point for ATP. Positions 472–475 (NDLN) match the DEGH box motif. Lys615 participates in a covalent cross-link: Glycyl lysine isopeptide (Lys-Gly) (interchain with G-Cter in ubiquitin). One can recognise a Helicase C-terminal domain in the interval 631–790 (KLRVLMTLLE…DSEMRNKESS (160 aa)).

The protein belongs to the SNF2/RAD54 helicase family. Interacts with RAD51 and DMC1.

It localises to the nucleus. The enzyme catalyses ATP + H2O = ADP + phosphate + H(+). Its function is as follows. Involved in the recombinational repair of double-strand breaks (DSB) in DNA during mitosis and meiosis. Has DNA dependent ATPase activity. Promotes D-loop (displacement loop) formation with RAD51 recombinase. Modifies the topology of double-stranded DNA during the D-loop reaction to facilitate the invasion of the homologous duplex molecule by the initiating single-stranded DNA substrate. Required for adaptation from G2/M checkpoint arrest induced by a double strand break, by participating in monitoring the extent of single-stranded DNA produced by resection of DNA ends. This role is distinct from its roles in recombination. Promotes colocalization of RAD51 and DMC1 during meiotic recombination. Involved in crossover interference. The polypeptide is DNA repair and recombination protein RDH54 (RDH54) (Saccharomyces cerevisiae (strain AWRI1631) (Baker's yeast)).